The following is a 320-amino-acid chain: GRAM domain-containing protein 2A (320 aa).

Positions 33–56 (TEKPGKVQEPPDDGSLHWSEGSKG) are disordered. The 68-residue stretch at 74–141 (QQYHKLFKDI…VSVQLIKKHK (68 aa)) folds into the GRAM domain. The helical transmembrane segment at 278–298 (LLKVIFVMICFLVLSSSYLAF) threads the bilayer.

Post-translationally, phosphorylated.

It localises to the endoplasmic reticulum membrane. It is found in the cell membrane. Functionally, participates in the organization ofendoplasmic reticulum-plasma membrane contact sites (EPCS) with pleiotropic functions including STIM1 recruitment and calcium homeostasis. Constitutive tether that co-localize with ESYT2/3 tethers at endoplasmic reticulum-plasma membrane contact sites in a phosphatidylinositol lipid-dependent manner. Pre-marks the subset of phosphtidylinositol 4,5-biphosphate (PI(4,5)P2)-enriched EPCS destined for the store operated calcium entry pathway (SOCE). The sequence is that of GRAM domain-containing protein 2A from Mus musculus (Mouse).